A 185-amino-acid chain; its full sequence is Orotate phosphoribosyltransferase (185 aa).

Residues Arg99, Lys100, Lys103, and Glu125–Ser133 contribute to the 5-phospho-alpha-D-ribose 1-diphosphate site. The orotate site is built by Thr129 and Arg157.

Belongs to the purine/pyrimidine phosphoribosyltransferase family. PyrE subfamily. In terms of assembly, homodimer. Mg(2+) is required as a cofactor.

The catalysed reaction is orotidine 5'-phosphate + diphosphate = orotate + 5-phospho-alpha-D-ribose 1-diphosphate. It functions in the pathway pyrimidine metabolism; UMP biosynthesis via de novo pathway; UMP from orotate: step 1/2. Functionally, catalyzes the transfer of a ribosyl phosphate group from 5-phosphoribose 1-diphosphate to orotate, leading to the formation of orotidine monophosphate (OMP). The sequence is that of Orotate phosphoribosyltransferase from Methanococcus maripaludis (strain DSM 14266 / JCM 13030 / NBRC 101832 / S2 / LL).